The following is a 108-amino-acid chain: Iron-sulfur cluster assembly protein CyaY (108 aa).

This sequence belongs to the frataxin family.

Its function is as follows. Involved in iron-sulfur (Fe-S) cluster assembly. May act as a regulator of Fe-S biogenesis. This Burkholderia orbicola (strain MC0-3) protein is Iron-sulfur cluster assembly protein CyaY.